We begin with the raw amino-acid sequence, 235 residues long: MIKLKNVTKTYKMGEEIIYALKNVNLNIKEGEFVSIMGPSGSGKSTMLNIIGCLDKPTEGEVYIDNIKTNDLDDDELTKIRRDKIGFVFQQFNLIPLLTALENVELPLIFKYRGAMSGEERRKRALECLKMAELEERFANHKPNQLSGGQQQRVAIARALANNPPIILADEPTGALDSKTGEKIMQLLKKLNEEDGKTVVVVTHDINVARFGERIIYLKDGEVEREEKLRGFDDR.

Residues 2 to 235 (IKLKNVTKTY…EEKLRGFDDR (234 aa)) form the ABC transporter domain. 38-45 (GPSGSGKS) provides a ligand contact to ATP.

The protein belongs to the ABC transporter superfamily.

This is an uncharacterized protein from Methanocaldococcus jannaschii (strain ATCC 43067 / DSM 2661 / JAL-1 / JCM 10045 / NBRC 100440) (Methanococcus jannaschii).